Here is a 378-residue protein sequence, read N- to C-terminus: N-acetyllactosaminide beta-1,3-N-acetylglucosaminyltransferase 4 (378 aa).

The Cytoplasmic portion of the chain corresponds to Met1–Cys28. Residues Arg29–Leu49 form a helical; Signal-anchor for type II membrane protein membrane-spanning segment. The Lumenal segment spans residues Arg50–Arg378. The segment at Pro59–Thr81 is disordered. The N-linked (GlcNAc...) asparagine glycan is linked to Asn192.

The protein belongs to the glycosyltransferase 31 family. Mainly expressed in brain tissues such as whole brain, hippocampus, amygdala, cerebellum and caudate nucleus. Also expressed in colon, esophagus and kidney.

The protein resides in the golgi apparatus membrane. It catalyses the reaction a beta-D-galactosyl-(1-&gt;4)-N-acetyl-beta-D-glucosaminyl derivative + UDP-N-acetyl-alpha-D-glucosamine = an N-acetyl-beta-D-glucosaminyl-(1-&gt;3)-beta-D-galactosyl-(1-&gt;4)-N-acetyl-beta-D-glucosaminyl derivative + UDP + H(+). It participates in protein modification; protein glycosylation. In terms of biological role, beta-1,3-N-acetylglucosaminyltransferase involved in the synthesis of poly-N-acetyllactosamine. Has activity for type 2 oligosaccharides. In Homo sapiens (Human), this protein is N-acetyllactosaminide beta-1,3-N-acetylglucosaminyltransferase 4 (B3GNT4).